The sequence spans 248 residues: Probable transcriptional regulatory protein Nham_3525 (248 aa).

Residues 1–21 are disordered; the sequence is MAGHSQFKNIMHRKGRQDAQK.

This sequence belongs to the TACO1 family.

It is found in the cytoplasm. The polypeptide is Probable transcriptional regulatory protein Nham_3525 (Nitrobacter hamburgensis (strain DSM 10229 / NCIMB 13809 / X14)).